The sequence spans 123 residues: Ribosome-binding factor A (123 aa).

The protein belongs to the RbfA family. Monomer. Binds 30S ribosomal subunits, but not 50S ribosomal subunits or 70S ribosomes.

The protein resides in the cytoplasm. Functionally, one of several proteins that assist in the late maturation steps of the functional core of the 30S ribosomal subunit. Associates with free 30S ribosomal subunits (but not with 30S subunits that are part of 70S ribosomes or polysomes). Required for efficient processing of 16S rRNA. May interact with the 5'-terminal helix region of 16S rRNA. The protein is Ribosome-binding factor A of Solibacter usitatus (strain Ellin6076).